A 331-amino-acid chain; its full sequence is Glycerol-3-phosphate dehydrogenase [NAD(P)+] (331 aa).

NADPH-binding residues include Trp-13, Arg-33, and Lys-103. 3 residues coordinate sn-glycerol 3-phosphate: Lys-103, Gly-131, and Thr-133. Ala-135 lines the NADPH pocket. Residues Lys-187, Asp-240, Ser-250, Arg-251, and Asn-252 each coordinate sn-glycerol 3-phosphate. Lys-187 serves as the catalytic Proton acceptor. An NADPH-binding site is contributed by Arg-251. Val-275 and Glu-277 together coordinate NADPH.

Belongs to the NAD-dependent glycerol-3-phosphate dehydrogenase family.

The protein resides in the cytoplasm. The enzyme catalyses sn-glycerol 3-phosphate + NAD(+) = dihydroxyacetone phosphate + NADH + H(+). The catalysed reaction is sn-glycerol 3-phosphate + NADP(+) = dihydroxyacetone phosphate + NADPH + H(+). It participates in membrane lipid metabolism; glycerophospholipid metabolism. Its function is as follows. Catalyzes the reduction of the glycolytic intermediate dihydroxyacetone phosphate (DHAP) to sn-glycerol 3-phosphate (G3P), the key precursor for phospholipid synthesis. The sequence is that of Glycerol-3-phosphate dehydrogenase [NAD(P)+] from Novosphingobium aromaticivorans (strain ATCC 700278 / DSM 12444 / CCUG 56034 / CIP 105152 / NBRC 16084 / F199).